Here is a 255-residue protein sequence, read N- to C-terminus: UDP-2,3-diacylglucosamine hydrolase (255 aa).

Mn(2+)-binding residues include aspartate 8, histidine 10, aspartate 41, asparagine 79, and histidine 114. 79-80 is a binding site for substrate; that stretch reads NR. Positions 122, 160, 164, 167, and 195 each coordinate substrate. 2 residues coordinate Mn(2+): histidine 195 and histidine 197.

Belongs to the LpxH family. The cofactor is Mn(2+).

The protein localises to the cell inner membrane. The enzyme catalyses UDP-2-N,3-O-bis[(3R)-3-hydroxytetradecanoyl]-alpha-D-glucosamine + H2O = 2-N,3-O-bis[(3R)-3-hydroxytetradecanoyl]-alpha-D-glucosaminyl 1-phosphate + UMP + 2 H(+). It functions in the pathway glycolipid biosynthesis; lipid IV(A) biosynthesis; lipid IV(A) from (3R)-3-hydroxytetradecanoyl-[acyl-carrier-protein] and UDP-N-acetyl-alpha-D-glucosamine: step 4/6. In terms of biological role, hydrolyzes the pyrophosphate bond of UDP-2,3-diacylglucosamine to yield 2,3-diacylglucosamine 1-phosphate (lipid X) and UMP by catalyzing the attack of water at the alpha-P atom. Involved in the biosynthesis of lipid A, a phosphorylated glycolipid that anchors the lipopolysaccharide to the outer membrane of the cell. The protein is UDP-2,3-diacylglucosamine hydrolase of Hamiltonella defensa subsp. Acyrthosiphon pisum (strain 5AT).